The primary structure comprises 1172 residues: DNA-directed RNA polymerase subunit beta (1172 aa).

This sequence belongs to the RNA polymerase beta chain family. In terms of assembly, the RNAP catalytic core consists of 2 alpha, 1 beta, 1 beta' and 1 omega subunit. When a sigma factor is associated with the core the holoenzyme is formed, which can initiate transcription.

The catalysed reaction is RNA(n) + a ribonucleoside 5'-triphosphate = RNA(n+1) + diphosphate. In terms of biological role, DNA-dependent RNA polymerase catalyzes the transcription of DNA into RNA using the four ribonucleoside triphosphates as substrates. This chain is DNA-directed RNA polymerase subunit beta, found in Mycobacterium sp. (strain KMS).